The sequence spans 261 residues: Phosphatidylglycerol--prolipoprotein diacylglyceryl transferase (261 aa).

4 consecutive transmembrane segments (helical) span residues Leu13–Ile33, Val50–Tyr70, Trp86–Phe106, and Ile112–Gly132. Residue Arg133 participates in a 1,2-diacyl-sn-glycero-3-phospho-(1'-sn-glycerol) binding. Transmembrane regions (helical) follow at residues Leu169–Phe189, Gly197–Val217, and Ile232–Leu252.

This sequence belongs to the Lgt family.

Its subcellular location is the cell inner membrane. It catalyses the reaction L-cysteinyl-[prolipoprotein] + a 1,2-diacyl-sn-glycero-3-phospho-(1'-sn-glycerol) = an S-1,2-diacyl-sn-glyceryl-L-cysteinyl-[prolipoprotein] + sn-glycerol 1-phosphate + H(+). It participates in protein modification; lipoprotein biosynthesis (diacylglyceryl transfer). In terms of biological role, catalyzes the transfer of the diacylglyceryl group from phosphatidylglycerol to the sulfhydryl group of the N-terminal cysteine of a prolipoprotein, the first step in the formation of mature lipoproteins. The protein is Phosphatidylglycerol--prolipoprotein diacylglyceryl transferase of Ehrlichia canis (strain Jake).